A 296-amino-acid chain; its full sequence is Polyamine aminopropyltransferase (296 aa).

One can recognise a PABS domain in the interval 16 to 251; it reads HLWYFEYYTG…GMWSYTFASK (236 aa). Glutamine 46 is an S-methyl-5'-thioadenosine binding site. 2 residues coordinate spermidine: histidine 77 and aspartate 101. S-methyl-5'-thioadenosine contacts are provided by residues glutamate 121 and 152–153; that span reads NG. The active-site Proton acceptor is aspartate 170. 170–173 is a spermidine binding site; sequence DSTD.

It belongs to the spermidine/spermine synthase family. As to quaternary structure, homodimer or homotetramer.

It localises to the cytoplasm. The catalysed reaction is S-adenosyl 3-(methylsulfanyl)propylamine + putrescine = S-methyl-5'-thioadenosine + spermidine + H(+). The protein operates within amine and polyamine biosynthesis; spermidine biosynthesis; spermidine from putrescine: step 1/1. Its function is as follows. Catalyzes the irreversible transfer of a propylamine group from the amino donor S-adenosylmethioninamine (decarboxy-AdoMet) to putrescine (1,4-diaminobutane) to yield spermidine. This chain is Polyamine aminopropyltransferase, found in Thermotoga petrophila (strain ATCC BAA-488 / DSM 13995 / JCM 10881 / RKU-1).